A 762-amino-acid polypeptide reads, in one-letter code: 5-methyltetrahydropteroyltriglutamate--homocysteine methyltransferase (762 aa).

5-methyltetrahydropteroyltri-L-glutamate is bound by residues 16–19 (RELK) and Lys118. L-homocysteine contacts are provided by residues 439–441 (IGS) and Glu492. Residues 439-441 (IGS) and Glu492 each bind L-methionine. 5-methyltetrahydropteroyltri-L-glutamate contacts are provided by residues 523 to 524 (RC) and Trp569. Asp607 contributes to the L-homocysteine binding site. Asp607 serves as a coordination point for L-methionine. 5-methyltetrahydropteroyltri-L-glutamate is bound at residue Glu613. 3 residues coordinate Zn(2+): His649, Cys651, and Glu673. The Proton donor role is filled by His702. Position 734 (Cys734) interacts with Zn(2+).

It belongs to the vitamin-B12 independent methionine synthase family. Zn(2+) is required as a cofactor.

The enzyme catalyses 5-methyltetrahydropteroyltri-L-glutamate + L-homocysteine = tetrahydropteroyltri-L-glutamate + L-methionine. It functions in the pathway amino-acid biosynthesis; L-methionine biosynthesis via de novo pathway; L-methionine from L-homocysteine (MetE route): step 1/1. In terms of biological role, catalyzes the transfer of a methyl group from 5-methyltetrahydrofolate to homocysteine resulting in methionine formation. This is 5-methyltetrahydropteroyltriglutamate--homocysteine methyltransferase from Pseudomonas entomophila (strain L48).